A 396-amino-acid polypeptide reads, in one-letter code: Chalcone synthase B (396 aa).

Cys-170 is a catalytic residue.

Belongs to the thiolase-like superfamily. Chalcone/stilbene synthases family.

The catalysed reaction is (E)-4-coumaroyl-CoA + 3 malonyl-CoA + 3 H(+) = 2',4,4',6'-tetrahydroxychalcone + 3 CO2 + 4 CoA. It functions in the pathway secondary metabolite biosynthesis; flavonoid biosynthesis. Its function is as follows. The primary product of this enzyme is 4,2',4',6'-tetrahydroxychalcone (also termed naringenin-chalcone or chalcone) which can under specific conditions spontaneously isomerize into naringenin. The sequence is that of Chalcone synthase B (CHSB) from Ipomoea purpurea (Common morning glory).